The chain runs to 646 residues: Choline transporter-like protein 1 (646 aa).

At 1–27 (MGCCGCGSEEGSVRQWKPLEQRSCTDV) the chain is on the cytoplasmic side. A helical transmembrane segment spans residues 28–48 (LWLLIFVLFCIGMAIICGFAI). Topologically, residues 49-207 (ASGAAQRLVF…RVITGVMTSK (159 aa)) are extracellular. Residue Asn133 is glycosylated (N-linked (GlcNAc...) asparagine). Residues 208-228 (EIIVGLCLMSLVLSILLMVII) traverse the membrane as a helical segment. Residues 229 to 233 (RYISK) are Cytoplasmic-facing. Residues 234-254 (VLVWILAILTIIGSIGGTAVL) form a helical membrane-spanning segment. Over 255-281 (WWLYADHKKTLKLDPSQGDVAADNVTA) the chain is Extracellular. The N-linked (GlcNAc...) asparagine glycan is linked to Asn278. A helical membrane pass occupies residues 282 to 302 (LLVCAIIATVITVILLLLMLI). Over 303–308 (MRKRVA) the chain is Cytoplasmic. The chain crosses the membrane as a helical span at residues 309–329 (LTIALFHVAGKVFIHIPFLIF). Topologically, residues 330–331 (QS) are extracellular. The chain crosses the membrane as a helical span at residues 332–352 (LWTFLALAFFWIYWIAVLLLL). The Cytoplasmic segment spans residues 353 to 373 (ATAGYPQKKDQGYVEFKVSGP). The helical transmembrane segment at 374–394 (LQYTWIYHLVGLIWISEFILA) threads the bilayer. Residues 395–435 (CQQMTIAGAVVTYYFTRDKHNLPATPILASMCRLIKYHLGT) are Extracellular-facing. A helical membrane pass occupies residues 436-456 (VAKGSFIITLIKIPQMILVYI). The Cytoplasmic portion of the chain corresponds to 457–530 (HSQLKGKENA…RVAAINTVGD (74 aa)). The helical transmembrane segment at 531–551 (FVLFLGKLLIVLVTGFVGIIL) threads the bilayer. Residues 552-559 (LNYQRDYT) lie on the Extracellular side of the membrane. Residues 560 to 580 (VWVLPLIIICLFAFFVSHCFL) traverse the membrane as a helical segment. The Cytoplasmic portion of the chain corresponds to 581 to 646 (SIYEMVVDVL…KSMASGSDNA (66 aa)).

It belongs to the CTL (choline transporter-like) family. In terms of tissue distribution, present in myelinated structures from brain and spinal cord (at protein level).

The protein localises to the cell membrane. Its subcellular location is the mitochondrion outer membrane. The catalysed reaction is choline(out) + n H(+)(in) = choline(in) + n H(+)(out). The enzyme catalyses ethanolamine(out) + n H(+)(in) = ethanolamine(in) + n H(+)(out). Probable choline transporter. May be involved in membrane synthesis and myelin production. This is Choline transporter-like protein 1 (slc44a1) from Torpedo marmorata (Marbled electric ray).